We begin with the raw amino-acid sequence, 747 residues long: Protein O-mannosyl-transferase 1 (747 aa).

7 consecutive transmembrane segments (helical) span residues 30–50, 90–110, 121–141, 176–196, 205–225, 228–248, and 267–287; these read PLVV…LGLL, FGHM…NFLW, VPVW…VPMA, LLES…LKFF, SVHW…AVGI, MGIF…WHLI, and VALL…HLML. 3 MIR domains span residues 318–381, 392–449, and 453–513; these read PLEV…VKDP, PRPV…LDIV, and SNQD…VEEH. 3 N-linked (GlcNAc...) asparagine glycosylation sites follow: N435, N471, and N539. The next 3 membrane-spanning stretches (helical) occupy residues 597–617, 636–656, and 660–680; these read IVIW…FFWY, WVLA…PFFL, and MLFL…LPIV.

The protein belongs to the glycosyltransferase 39 family.

The protein resides in the endoplasmic reticulum membrane. It catalyses the reaction a di-trans,poly-cis-dolichyl beta-D-mannosyl phosphate + L-seryl-[protein] = 3-O-(alpha-D-mannosyl)-L-seryl-[protein] + a di-trans,poly-cis-dolichyl phosphate + H(+). The catalysed reaction is a di-trans,poly-cis-dolichyl beta-D-mannosyl phosphate + L-threonyl-[protein] = 3-O-(alpha-D-mannosyl)-L-threonyl-[protein] + a di-trans,poly-cis-dolichyl phosphate + H(+). It functions in the pathway protein modification; protein glycosylation. Functionally, transfers mannosyl residues to the hydroxyl group of serine or threonine residues. Coexpression of both POMT1 and POMT2 is necessary for enzyme activity, expression of either POMT1 or POMT2 alone is insufficient. Essentially dedicated to O-mannosylation of alpha-DAG1 and few other proteins but not of cadherins and protocaherins. This Rattus norvegicus (Rat) protein is Protein O-mannosyl-transferase 1 (Pomt1).